Here is a 337-residue protein sequence, read N- to C-terminus: Gastrula zinc finger protein XlCGF26.1 (337 aa).

12 C2H2-type zinc fingers span residues 6 to 28 (FDCT…YKIH), 34 to 56 (FICA…SKIH), 62 to 84 (FPCT…NKIH), 90 to 112 (FICA…SKIH), 118 to 140 (FPCT…NKIH), 146 to 168 (FICA…SKIH), 174 to 196 (FPCT…NKIH), 202 to 224 (FTCT…VKIH), 230 to 252 (FTCT…NKIH), 258 to 280 (FTCT…FKIH), 286 to 309 (FSCT…KRTH), and 315 to 337 (FTCT…NKIH).

Belongs to the krueppel C2H2-type zinc-finger protein family.

It is found in the nucleus. In terms of biological role, may be involved in transcriptional regulation. The polypeptide is Gastrula zinc finger protein XlCGF26.1 (Xenopus laevis (African clawed frog)).